The chain runs to 384 residues: S-adenosylmethionine synthase (384 aa).

ATP is bound at residue histidine 16. A Mg(2+)-binding site is contributed by aspartate 18. Position 44 (glutamate 44) interacts with K(+). Positions 57 and 100 each coordinate L-methionine. Residues 100 to 110 (QSADIAMGVDE) form a flexible loop region. ATP is bound by residues 165-167 (DAK), aspartate 240, 246-247 (RK), alanine 263, and lysine 267. Residue aspartate 240 coordinates L-methionine. Lysine 271 contributes to the L-methionine binding site.

It belongs to the AdoMet synthase family. Homotetramer; dimer of dimers. Requires Mg(2+) as cofactor. K(+) is required as a cofactor.

It is found in the cytoplasm. It carries out the reaction L-methionine + ATP + H2O = S-adenosyl-L-methionine + phosphate + diphosphate. It functions in the pathway amino-acid biosynthesis; S-adenosyl-L-methionine biosynthesis; S-adenosyl-L-methionine from L-methionine: step 1/1. In terms of biological role, catalyzes the formation of S-adenosylmethionine (AdoMet) from methionine and ATP. The overall synthetic reaction is composed of two sequential steps, AdoMet formation and the subsequent tripolyphosphate hydrolysis which occurs prior to release of AdoMet from the enzyme. This Cellvibrio japonicus (strain Ueda107) (Pseudomonas fluorescens subsp. cellulosa) protein is S-adenosylmethionine synthase.